A 364-amino-acid chain; its full sequence is D-alanine--D-alanine ligase (364 aa).

One can recognise an ATP-grasp domain in the interval 140 to 346 (KKLALLEGIP…YSQLIDKLIS (207 aa)). Position 173 to 228 (173 to 228 (ESEFSYPVFVKPANSGSSVGISKAKDREDLVLAIHEAFLYDTKILIEQAINAREIE)) interacts with ATP. The Mg(2+) site is built by Asp-299, Glu-313, and Asn-315.

The protein belongs to the D-alanine--D-alanine ligase family. The cofactor is Mg(2+). Mn(2+) is required as a cofactor.

The protein resides in the cytoplasm. It carries out the reaction 2 D-alanine + ATP = D-alanyl-D-alanine + ADP + phosphate + H(+). It functions in the pathway cell wall biogenesis; peptidoglycan biosynthesis. Cell wall formation. The chain is D-alanine--D-alanine ligase from Caldicellulosiruptor bescii (strain ATCC BAA-1888 / DSM 6725 / KCTC 15123 / Z-1320) (Anaerocellum thermophilum).